The following is a 214-amino-acid chain: MAYTLPELGYAYDALEPHFDAMTMEIHHSKHHQAYVNNANAALENLPELAQGCPGQLLTKLAEVPADKLTAIRNNVGGHLNHSLFWKSLKKGTTLQGALKDAIVRDFGSVEAFQAEFEKAAATRFGSGWAWLVLQENGKLAVVSTANQDSPVMGKAIAGCEGYPLLGLDVWEHAYYLKFQNRRPDYIKEFWHVVNWDFVAERFEKKVEHCNCTK.

4 residues coordinate Mn(2+): His-27, His-82, Asp-169, and His-173.

The protein belongs to the iron/manganese superoxide dismutase family. As to quaternary structure, homodimer. It depends on Mn(2+) as a cofactor.

It carries out the reaction 2 superoxide + 2 H(+) = H2O2 + O2. Destroys superoxide anion radicals which are normally produced within the cells and which are toxic to biological systems. The protein is Superoxide dismutase [Mn] (sodA) of Pasteurella multocida (strain Pm70).